Consider the following 738-residue polypeptide: Interleukin-12 receptor subunit beta-1 (738 aa).

The first 19 residues, Met-1 to Cys-19, serve as a signal peptide directing secretion. Over Gln-20–Ser-565 the chain is Extracellular. 5 Fibronectin type-III domains span residues Gly-47–Leu-152, Leu-152–Leu-258, Pro-259–Gln-359, Glu-360–Ser-465, and Thr-469–Ser-565. N-linked (GlcNAc...) asparagine glycosylation is present at Asn-50. A disulfide bridge connects residues Cys-53 and Cys-63. Asn-73, Asn-86, Asn-130, Asn-144, Asn-169, and Asn-188 each carry an N-linked (GlcNAc...) asparagine glycan. Residues Trp-244 to Ser-248 carry the WSXWS motif motif. Asn-330, Asn-368, Asn-374, Asn-401, Asn-463, and Asn-477 each carry an N-linked (GlcNAc...) asparagine glycan. Residues Arg-566–Leu-591 traverse the membrane as a helical segment. The Cytoplasmic segment spans residues Asn-592–Ala-738. Positions Leu-598–Cys-606 match the Box 1 motif motif.

Belongs to the type I cytokine receptor family. Type 2 subfamily. In terms of assembly, dimer or oligomer; disulfide-linked. Interacts with IL12RB2 to form the high affinity IL12 receptor. Heterodimer with IL23R; in presence of IL23. The heterodimer forms the IL23 receptor.

It is found in the membrane. Its function is as follows. Functions as an interleukin receptor which binds interleukin-12 with low affinity and is involved in IL12 transduction. Associated with IL12RB2 it forms a functional, high affinity receptor for IL12. Also associates with IL23R to form the interleukin-23 receptor which functions in IL23 signal transduction probably through activation of the Jak-Stat signaling cascade. In Mus musculus (Mouse), this protein is Interleukin-12 receptor subunit beta-1 (Il12rb1).